Reading from the N-terminus, the 426-residue chain is Proline--tRNA ligase (426 aa).

It belongs to the class-II aminoacyl-tRNA synthetase family. ProS type 2 subfamily. In terms of assembly, homodimer.

Its subcellular location is the cytoplasm. It carries out the reaction tRNA(Pro) + L-proline + ATP = L-prolyl-tRNA(Pro) + AMP + diphosphate. In terms of biological role, catalyzes the attachment of proline to tRNA(Pro) in a two-step reaction: proline is first activated by ATP to form Pro-AMP and then transferred to the acceptor end of tRNA(Pro). The chain is Proline--tRNA ligase from Anaplasma phagocytophilum (strain HZ).